The sequence spans 318 residues: Very-long-chain 3-oxoacyl-CoA reductase-A (318 aa).

Residues 15 to 35 (FWYLGVLAAAWWGLRAACCLL) traverse the membrane as a helical segment. NADP(+) is bound at residue 54-83 (GKWAVVTGATDGIGKAYAEELARRGMSIVL). Helical transmembrane passes span 187–207 (GVIL…LTVY) and 281–301 (AIMG…SMGM). Residue S194 coordinates substrate. The active-site Proton acceptor is Y207.

Belongs to the short-chain dehydrogenases/reductases (SDR) family. 17-beta-HSD 3 subfamily.

It localises to the endoplasmic reticulum membrane. The catalysed reaction is a very-long-chain (3R)-3-hydroxyacyl-CoA + NADP(+) = a very-long-chain 3-oxoacyl-CoA + NADPH + H(+). It catalyses the reaction 17beta-estradiol + NAD(+) = estrone + NADH + H(+). The enzyme catalyses 17beta-estradiol + NADP(+) = estrone + NADPH + H(+). Its pathway is lipid metabolism; fatty acid biosynthesis. The protein operates within steroid biosynthesis; estrogen biosynthesis. Functionally, catalyzes the second of the four reactions of the long-chain fatty acids elongation cycle. This endoplasmic reticulum-bound enzymatic process, allows the addition of two carbons to the chain of long- and very long-chain fatty acids/VLCFAs per cycle. This enzyme has a 3-ketoacyl-CoA reductase activity, reducing 3-ketoacyl-CoA to 3-hydroxyacyl-CoA, within each cycle of fatty acid elongation. Thereby, it may participate in the production of VLCFAs of different chain lengths that are involved in multiple biological processes as precursors of membrane lipids and lipid mediators. May also catalyze the transformation of estrone (E1) into estradiol (E2) and play a role in estrogen formation. This is Very-long-chain 3-oxoacyl-CoA reductase-A (hsd17b12-a) from Xenopus laevis (African clawed frog).